A 478-amino-acid polypeptide reads, in one-letter code: Sulfate adenylyltransferase subunit 1 (478 aa).

Positions lysine 24–aspartate 240 constitute a tr-type G domain. A G1 region spans residues glycine 33–serine 40. A GTP-binding site is contributed by glycine 33 to serine 40. The interval glycine 91–aspartate 95 is G2. Residues aspartate 112 to glycine 115 are G3. GTP is bound by residues aspartate 112–histidine 116 and asparagine 167–aspartate 170. Residues asparagine 167 to aspartate 170 are G4. Positions serine 206–leucine 208 are G5.

It belongs to the TRAFAC class translation factor GTPase superfamily. Classic translation factor GTPase family. CysN/NodQ subfamily. In terms of assembly, heterodimer composed of CysD, the smaller subunit, and CysN.

The enzyme catalyses sulfate + ATP + H(+) = adenosine 5'-phosphosulfate + diphosphate. It participates in sulfur metabolism; hydrogen sulfide biosynthesis; sulfite from sulfate: step 1/3. With CysD forms the ATP sulfurylase (ATPS) that catalyzes the adenylation of sulfate producing adenosine 5'-phosphosulfate (APS) and diphosphate, the first enzymatic step in sulfur assimilation pathway. APS synthesis involves the formation of a high-energy phosphoric-sulfuric acid anhydride bond driven by GTP hydrolysis by CysN coupled to ATP hydrolysis by CysD. This chain is Sulfate adenylyltransferase subunit 1, found in Aliivibrio fischeri (strain ATCC 700601 / ES114) (Vibrio fischeri).